Consider the following 107-residue polypeptide: Large ribosomal subunit protein uL24 (107 aa).

This sequence belongs to the universal ribosomal protein uL24 family. In terms of assembly, part of the 50S ribosomal subunit.

Its function is as follows. One of two assembly initiator proteins, it binds directly to the 5'-end of the 23S rRNA, where it nucleates assembly of the 50S subunit. One of the proteins that surrounds the polypeptide exit tunnel on the outside of the subunit. The protein is Large ribosomal subunit protein uL24 of Thiobacillus denitrificans (strain ATCC 25259 / T1).